The primary structure comprises 278 residues: Putative cysteine-rich repeat secretory protein 19 (278 aa).

The signal sequence occupies residues 1–32; it reads MYSSSSVSKRFVLVPIVVVVTTQLLLVRNVSS. Gnk2-homologous domains are found at residues 39–147 and 160–267; these read YLHH…SLDT and PSAK…LYPF.

Belongs to the cysteine-rich repeat secretory protein family.

Its subcellular location is the secreted. The polypeptide is Putative cysteine-rich repeat secretory protein 19 (CRRSP19) (Arabidopsis thaliana (Mouse-ear cress)).